A 132-amino-acid polypeptide reads, in one-letter code: uncharacterized protein (132 aa).

Functionally, the presence of the two linear plasmids, termed pGKL1 and pGKL2, in strains of Kluyveromyces lactis confers the killer phenotype to the host cell, by promoting the secretion of a toxin able to inhibit the growth of sensitive strains. This is an uncharacterized protein from Kluyveromyces lactis (strain ATCC 8585 / CBS 2359 / DSM 70799 / NBRC 1267 / NRRL Y-1140 / WM37) (Yeast).